The following is a 247-amino-acid chain: ATP synthase subunit a, chloroplastic (247 aa).

The next 5 helical transmembrane spans lie at 36–56, 95–115, 134–154, 199–219, and 220–240; these read GQVLLVSWFVMTIIISLSIFG, VPFIGTIFLFIFVSNWSGALV, INTTAALALLTSISYFYAGFS, LVVGVLITLVPLVVPMPLMLL, and GLFTSAIQALIFATLAAAYIG.

This sequence belongs to the ATPase A chain family. In terms of assembly, F-type ATPases have 2 components, CF(1) - the catalytic core - and CF(0) - the membrane proton channel. CF(1) has five subunits: alpha(3), beta(3), gamma(1), delta(1), epsilon(1). CF(0) has four main subunits: a, b, b' and c.

The protein localises to the plastid. Its subcellular location is the chloroplast thylakoid membrane. Functionally, key component of the proton channel; it plays a direct role in the translocation of protons across the membrane. This chain is ATP synthase subunit a, chloroplastic, found in Mesostigma viride (Green alga).